The sequence spans 343 residues: tRNA N6-adenosine threonylcarbamoyltransferase (343 aa).

Fe cation-binding residues include H115 and H119. Substrate contacts are provided by residues 137-141 (IVSGG), D170, G183, D187, and N276. D304 serves as a coordination point for Fe cation.

This sequence belongs to the KAE1 / TsaD family. Fe(2+) is required as a cofactor.

It localises to the cytoplasm. It carries out the reaction L-threonylcarbamoyladenylate + adenosine(37) in tRNA = N(6)-L-threonylcarbamoyladenosine(37) in tRNA + AMP + H(+). Functionally, required for the formation of a threonylcarbamoyl group on adenosine at position 37 (t(6)A37) in tRNAs that read codons beginning with adenine. Is involved in the transfer of the threonylcarbamoyl moiety of threonylcarbamoyl-AMP (TC-AMP) to the N6 group of A37, together with TsaE and TsaB. TsaD likely plays a direct catalytic role in this reaction. This Staphylococcus carnosus (strain TM300) protein is tRNA N6-adenosine threonylcarbamoyltransferase.